Consider the following 182-residue polypeptide: Carbonic anhydrase (182 aa).

Mg(2+) is bound by residues His64, His81, and His86.

Belongs to the gamma-class carbonic anhydrase family. Homotrimer. It depends on Mg(2+) as a cofactor. Requires Zn(2+) as cofactor.

The enzyme catalyses hydrogencarbonate + H(+) = CO2 + H2O. Reversible hydration of carbon dioxide. The polypeptide is Carbonic anhydrase (Geobacillus kaustophilus (strain HTA426)).